The following is a 657-amino-acid chain: Serine/threonine-protein kinase BUR1 (657 aa).

The Protein kinase domain occupies 60–366; it reads YREDEKLGQG…AMSAKHHPWF (307 aa). ATP-binding positions include 66–74 and Lys89; that span reads LGQGTFGEV. Catalysis depends on Asp195, which acts as the Proton acceptor. Position 240 is a phosphothreonine; by CAK (Thr240). Position 400 is a phosphoserine (Ser400). Thr405 bears the Phosphothreonine mark. Positions 414 to 657 are disordered; sequence KGESPVVKNL…FQNSDIADLY (244 aa). Ser417 is subject to Phosphoserine. Over residues 489-501 the composition is skewed to low complexity; it reads NNSSRNNRFSGNS. Composition is skewed to polar residues over residues 535–552, 564–595, and 614–625; these read SRYQ…SPND, PETN…NGSR, and ISPSQGQHQLTS. Positions 627 to 649 are enriched in basic and acidic residues; sequence PIEKKNGSFKDERAKPDESKEFQ. Ser634 carries the post-translational modification Phosphoserine.

This sequence belongs to the protein kinase superfamily. CMGC Ser/Thr protein kinase family. CDC2/CDKX subfamily. In terms of assembly, belongs to the BUR kinase complex composed of SGV1/BUR1 and BUR2. Interacts with BUR2 and RBP1.

It localises to the nucleus. It carries out the reaction L-seryl-[protein] + ATP = O-phospho-L-seryl-[protein] + ADP + H(+). It catalyses the reaction L-threonyl-[protein] + ATP = O-phospho-L-threonyl-[protein] + ADP + H(+). The enzyme catalyses [DNA-directed RNA polymerase] + ATP = phospho-[DNA-directed RNA polymerase] + ADP + H(+). In terms of biological role, serine/threonine-protein kinase component of the BUR kinase complex involved in transcription regulation. This complex phosphorylates 'Ser-120' of the UBC2/RAD6 ubiquitin-conjugating enzyme (E2), leading to monoubiquitination of histone H2B, the localization of the PAF1 complex to the chromatin, and the silencing of telomeric-associated genes. Also required for histone H3 'Lys-4' trimethylation. May phosphorylate the 'Ser-5' of the RBP1 carboxy-terminal domain (CTD) repeats. Necessary for the recovery from pheromone-induced growth arrest in the cell cycle G1 phase. The kinase activity of the complex requires the presence of BUR2. The polypeptide is Serine/threonine-protein kinase BUR1 (SGV1) (Saccharomyces cerevisiae (strain ATCC 204508 / S288c) (Baker's yeast)).